We begin with the raw amino-acid sequence, 354 residues long: Methylthioribose-1-phosphate isomerase (354 aa).

Substrate contacts are provided by residues 58-60 (RGA), arginine 101, and glutamine 204. The active-site Proton donor is aspartate 245. Substrate is bound at residue 255 to 256 (NK).

This sequence belongs to the eIF-2B alpha/beta/delta subunits family. MtnA subfamily.

It catalyses the reaction 5-(methylsulfanyl)-alpha-D-ribose 1-phosphate = 5-(methylsulfanyl)-D-ribulose 1-phosphate. The protein operates within amino-acid biosynthesis; L-methionine biosynthesis via salvage pathway; L-methionine from S-methyl-5-thio-alpha-D-ribose 1-phosphate: step 1/6. Functionally, catalyzes the interconversion of methylthioribose-1-phosphate (MTR-1-P) into methylthioribulose-1-phosphate (MTRu-1-P). This Xanthomonas campestris pv. campestris (strain ATCC 33913 / DSM 3586 / NCPPB 528 / LMG 568 / P 25) protein is Methylthioribose-1-phosphate isomerase.